The primary structure comprises 161 residues: Small ribosomal subunit protein uS19 (161 aa).

Positions Met-1–Gln-19 are enriched in basic residues. The tract at residues Met-1–Arg-26 is disordered.

The protein belongs to the universal ribosomal protein uS19 family.

Its function is as follows. Protein S19 forms a complex with S13 that binds strongly to the 16S ribosomal RNA. This is Small ribosomal subunit protein uS19 from Methanococcus maripaludis (strain C5 / ATCC BAA-1333).